Consider the following 117-residue polypeptide: Large ribosomal subunit protein bL20 (117 aa).

The protein belongs to the bacterial ribosomal protein bL20 family.

Its function is as follows. Binds directly to 23S ribosomal RNA and is necessary for the in vitro assembly process of the 50S ribosomal subunit. It is not involved in the protein synthesizing functions of that subunit. This is Large ribosomal subunit protein bL20 from Finegoldia magna (strain ATCC 29328 / DSM 20472 / WAL 2508) (Peptostreptococcus magnus).